We begin with the raw amino-acid sequence, 469 residues long: UDP-N-acetylmuramate--L-alanine ligase (469 aa).

Position 113–119 (113–119) interacts with ATP; that stretch reads GSHGKTT.

It belongs to the MurCDEF family.

The protein localises to the cytoplasm. The enzyme catalyses UDP-N-acetyl-alpha-D-muramate + L-alanine + ATP = UDP-N-acetyl-alpha-D-muramoyl-L-alanine + ADP + phosphate + H(+). The protein operates within cell wall biogenesis; peptidoglycan biosynthesis. In terms of biological role, cell wall formation. This chain is UDP-N-acetylmuramate--L-alanine ligase, found in Sorangium cellulosum (strain So ce56) (Polyangium cellulosum (strain So ce56)).